Consider the following 165-residue polypeptide: 6,7-dimethyl-8-ribityllumazine synthase (165 aa).

5-amino-6-(D-ribitylamino)uracil-binding positions include F24, 62–64 (AFE), and 86–88 (AVI). 91–92 (DT) lines the (2S)-2-hydroxy-3-oxobutyl phosphate pocket. H94 functions as the Proton donor in the catalytic mechanism. F119 contacts 5-amino-6-(D-ribitylamino)uracil. Residue R133 participates in (2S)-2-hydroxy-3-oxobutyl phosphate binding.

This sequence belongs to the DMRL synthase family.

The enzyme catalyses (2S)-2-hydroxy-3-oxobutyl phosphate + 5-amino-6-(D-ribitylamino)uracil = 6,7-dimethyl-8-(1-D-ribityl)lumazine + phosphate + 2 H2O + H(+). It functions in the pathway cofactor biosynthesis; riboflavin biosynthesis; riboflavin from 2-hydroxy-3-oxobutyl phosphate and 5-amino-6-(D-ribitylamino)uracil: step 1/2. Its function is as follows. Catalyzes the formation of 6,7-dimethyl-8-ribityllumazine by condensation of 5-amino-6-(D-ribitylamino)uracil with 3,4-dihydroxy-2-butanone 4-phosphate. This is the penultimate step in the biosynthesis of riboflavin. This is 6,7-dimethyl-8-ribityllumazine synthase from Prochlorococcus marinus (strain MIT 9313).